Here is a 702-residue protein sequence, read N- to C-terminus: DNA ligase (702 aa).

Residues 32–36 and 81–82 each bind NAD(+); these read DAEYD and SL. The tract at residues 104–125 is disordered; it reads AESSAQKASLNPLVRDSDQKNR. Glu139 serves as a coordination point for NAD(+). The N6-AMP-lysine intermediate role is filled by Lys141. NAD(+)-binding residues include Arg162, Glu199, Lys316, and Lys340. Positions 434, 437, 452, and 458 each coordinate Zn(2+). A BRCT domain is found at 616 to 702; sequence KPNHPFRDKT…KALKPEGTKV (87 aa).

The protein belongs to the NAD-dependent DNA ligase family. LigA subfamily. Requires Mg(2+) as cofactor. It depends on Mn(2+) as a cofactor.

The enzyme catalyses NAD(+) + (deoxyribonucleotide)n-3'-hydroxyl + 5'-phospho-(deoxyribonucleotide)m = (deoxyribonucleotide)n+m + AMP + beta-nicotinamide D-nucleotide.. Functionally, DNA ligase that catalyzes the formation of phosphodiester linkages between 5'-phosphoryl and 3'-hydroxyl groups in double-stranded DNA using NAD as a coenzyme and as the energy source for the reaction. It is essential for DNA replication and repair of damaged DNA. The polypeptide is DNA ligase (Hamiltonella defensa subsp. Acyrthosiphon pisum (strain 5AT)).